An 840-amino-acid polypeptide reads, in one-letter code: V-type proton ATPase 116 kDa subunit a 4 (840 aa).

Over 1–390 (MVSVFRSEEM…DAYGVGSYRE (390 aa)) the chain is Cytoplasmic. The chain crosses the membrane as a helical span at residues 391 to 409 (INPAPYTIITFPFLFAVMF). At 410-411 (GD) the chain is on the vacuolar side. A helical transmembrane segment spans residues 412-428 (CGHGTVMLLAALWMILN). The Cytoplasmic portion of the chain corresponds to 429 to 443 (ERRLLSQKTDNEIWN). Residues 444-473 (TFFHGRYLILLMGIFSIYTGLIYNDCFSKS) form a helical membrane-spanning segment. Residues 474 to 538 (LNIFGSSWSV…ASNKLTFLNS (65 aa)) lie on the Vacuolar side of the membrane. A helical membrane pass occupies residues 539–558 (YKMKMSVILGIVQMVFGVIL). Residues 559–576 (SLFNHIYFRRTLNIILQF) are Cytoplasmic-facing. The helical transmembrane segment at 577–597 (IPEMIFILCLFGYLVFMIIFK) threads the bilayer. The Vacuolar segment spans residues 598-642 (WCCFDVHVSQHAPSILIHFINMFLFNYSDSSNAPLYKHQQEVQSF). The helical transmembrane segment at 643-662 (FVVMALISVPWMLLIKPFIL) threads the bilayer. The Cytoplasmic segment spans residues 663-727 (RASHRKSQLQ…DVFVHQAIHT (65 aa)). A disordered region spans residues 675 to 704 (RIQEDATENIEGDSSSPSSRSGQRTSADTH). The chain crosses the membrane as a helical span at residues 728–752 (IEYCLGCISNTASYLRLWALSLAHA). Residues 753–773 (QLSEVLWTMVMNSGLQTRGWG) are Vacuolar-facing. The helical transmembrane segment at 774 to 812 (GIVGVFIIFAVFAVLTVAILLIMEGLSAFLHALRLHWVE) threads the bilayer. The Cytoplasmic portion of the chain corresponds to 813 to 840 (FQNKFYVGDGYKFSPFSFKHILDGTAEE).

Belongs to the V-ATPase 116 kDa subunit family. V-ATPase is a heteromultimeric enzyme made up of two complexes: the ATP-hydrolytic V1 complex and the proton translocation V0 complex. The V1 complex consists of three catalytic AB heterodimers that form a heterohexamer, three peripheral stalks each consisting of EG heterodimers, one central rotor including subunits D and F, and the regulatory subunits C and H. The proton translocation complex V0 consists of the proton transport subunit a, a ring of proteolipid subunits c9c'', rotary subunit d, subunits e and f, and the accessory subunits ATP6AP1/Ac45 and ATP6AP2/PRR. Interacts with the V1 complex V-ATPase subunit A ATP6V1A. Interacts with the V0 complex V-ATPase subunit c ATP6V0C. Expressed in adult and fetal kidney. Found in the inner ear.

It localises to the apical cell membrane. The protein localises to the basolateral cell membrane. Functionally, subunit of the V0 complex of vacuolar(H+)-ATPase (V-ATPase), a multisubunit enzyme composed of a peripheral complex (V1) that hydrolyzes ATP and a membrane integral complex (V0) that translocates protons. V-ATPase is responsible for acidifying and maintaining the pH of intracellular compartments and in some cell types, is targeted to the plasma membrane, where it is responsible for acidifying the extracellular environment. Involved in normal vectorial acid transport into the urine by the kidney. This Homo sapiens (Human) protein is V-type proton ATPase 116 kDa subunit a 4 (ATP6V0A4).